The primary structure comprises 218 residues: Large ribosomal subunit protein uL3 (218 aa).

The segment at G134 to Q154 is disordered. Q154 carries the post-translational modification N5-methylglutamine.

This sequence belongs to the universal ribosomal protein uL3 family. As to quaternary structure, part of the 50S ribosomal subunit. Forms a cluster with proteins L14 and L19. Methylated by PrmB.

In terms of biological role, one of the primary rRNA binding proteins, it binds directly near the 3'-end of the 23S rRNA, where it nucleates assembly of the 50S subunit. The polypeptide is Large ribosomal subunit protein uL3 (Polynucleobacter necessarius subsp. necessarius (strain STIR1)).